The chain runs to 423 residues: Protein CLP1 homolog (423 aa).

ATP is bound by residues E19, K60, and 122-127 (DVGKTT).

The protein belongs to the Clp1 family. Clp1 subfamily.

Its subcellular location is the nucleus. Functionally, required for endonucleolytic cleavage during polyadenylation-dependent pre-mRNA 3'-end formation. The sequence is that of Protein CLP1 homolog (cbc) from Anopheles gambiae (African malaria mosquito).